Reading from the N-terminus, the 495-residue chain is Leucine aminopeptidase 2 (495 aa).

The N-terminal stretch at 1–21 (MKSQLLSLAVAVTTISQGVVG) is a signal peptide. In terms of domain architecture, PA spans 124–218 (PPASKIMAEL…EDGKNLATLV (95 aa)). Residues Asn142 and Asn235 are each glycosylated (N-linked (GlcNAc...) asparagine). Positions 259 and 271 each coordinate Zn(2+). The N-linked (GlcNAc...) asparagine glycan is linked to Asn272. The Proton acceptor role is filled by Glu303. Zn(2+) is bound by residues Glu304 and Asp332. N-linked (GlcNAc...) asparagine glycosylation occurs at Asn352. Residue His430 coordinates Zn(2+).

Belongs to the peptidase M28 family. M28A subfamily. As to quaternary structure, monomer. The cofactor is Zn(2+).

The protein resides in the secreted. Its activity is regulated as follows. Activity is inhibited by EDTA, o-phenanthroline, bestatin and amastatin. Functionally, extracellular aminopeptidase that releases a wide variety of amino acids from natural peptides and contributes to pathogenicity. The sequence is that of Leucine aminopeptidase 2 (LAP2) from Trichophyton rubrum (Athlete's foot fungus).